Consider the following 154-residue polypeptide: Fucose mutarotase (154 aa).

Histidine 24 (proton donor) is an active-site residue. Aspartate 32 is a binding site for substrate. Aspartate 69 is a catalytic residue. The substrate site is built by methionine 79, tyrosine 120, tyrosine 138, and asparagine 140. Residue tyrosine 120 is part of the active site.

This sequence belongs to the RbsD / FucU family. Mainly homodimer, but also exists as homotetramer, homooctamer, and homodecamer. The homodimeric form seems catalytically inactive.

The catalysed reaction is alpha-L-fucose = beta-L-fucose. The protein operates within carbohydrate metabolism; L-fucose metabolism. Its function is as follows. Involved in the interconversion between alpha- and beta-L-fucoses. L-Fucose (6-deoxy-L-galactose) exists as alpha-L-fucose (29.5%) and beta-L-fucose (70.5%), the beta-form is metabolized through the salvage pathway. GDP-L-fucose formed either by the de novo or salvage pathways is transported into the endoplasmic reticulum, where it serves as a substrate for N- and O-glycosylations by fucosyltransferases. Fucosylated structures expressed on cell surfaces or secreted in biological fluids are believed to play a critical role in cell-cell adhesion and recognition processes. The protein is Fucose mutarotase (FUOM) of Homo sapiens (Human).